The sequence spans 506 residues: Histidine ammonia-lyase (506 aa).

The 5-imidazolinone (Ala-Gly) cross-link spans 143–145 (ASG). Ser-144 is subject to 2,3-didehydroalanine (Ser).

This sequence belongs to the PAL/histidase family. Post-translationally, contains an active site 4-methylidene-imidazol-5-one (MIO), which is formed autocatalytically by cyclization and dehydration of residues Ala-Ser-Gly.

It is found in the cytoplasm. It carries out the reaction L-histidine = trans-urocanate + NH4(+). Its pathway is amino-acid degradation; L-histidine degradation into L-glutamate; N-formimidoyl-L-glutamate from L-histidine: step 1/3. In Enterobacter sp. (strain 638), this protein is Histidine ammonia-lyase.